Here is a 128-residue protein sequence, read N- to C-terminus: Holo-[acyl-carrier-protein] synthase (128 aa).

Mg(2+)-binding residues include Asp-8 and Glu-60.

It belongs to the P-Pant transferase superfamily. AcpS family. Requires Mg(2+) as cofactor.

The protein resides in the cytoplasm. It carries out the reaction apo-[ACP] + CoA = holo-[ACP] + adenosine 3',5'-bisphosphate + H(+). In terms of biological role, transfers the 4'-phosphopantetheine moiety from coenzyme A to a Ser of acyl-carrier-protein. The sequence is that of Holo-[acyl-carrier-protein] synthase from Anaeromyxobacter dehalogenans (strain 2CP-C).